A 253-amino-acid polypeptide reads, in one-letter code: Triosephosphate isomerase (253 aa).

N9–K11 lines the substrate pocket. Residue H95 is the Electrophile of the active site. The active-site Proton acceptor is the E167. Substrate contacts are provided by residues G173, S213, and G234–G235. S213 carries the post-translational modification Phosphoserine.

The protein belongs to the triosephosphate isomerase family. Homodimer.

It is found in the cytoplasm. The catalysed reaction is D-glyceraldehyde 3-phosphate = dihydroxyacetone phosphate. The protein operates within carbohydrate biosynthesis; gluconeogenesis. It participates in carbohydrate degradation; glycolysis; D-glyceraldehyde 3-phosphate from glycerone phosphate: step 1/1. Its function is as follows. Involved in the gluconeogenesis. Catalyzes stereospecifically the conversion of dihydroxyacetone phosphate (DHAP) to D-glyceraldehyde-3-phosphate (G3P). The polypeptide is Triosephosphate isomerase (Lysinibacillus sphaericus (strain C3-41)).